A 1366-amino-acid chain; its full sequence is DNA-directed RNA polymerase subunit beta'' (1366 aa).

Zn(2+)-binding residues include Cys-220, Cys-291, Cys-298, and Cys-301.

It belongs to the RNA polymerase beta' chain family. RpoC2 subfamily. In plastids the minimal PEP RNA polymerase catalytic core is composed of four subunits: alpha, beta, beta', and beta''. When a (nuclear-encoded) sigma factor is associated with the core the holoenzyme is formed, which can initiate transcription. It depends on Zn(2+) as a cofactor.

The protein resides in the plastid. The protein localises to the chloroplast. It carries out the reaction RNA(n) + a ribonucleoside 5'-triphosphate = RNA(n+1) + diphosphate. In terms of biological role, DNA-dependent RNA polymerase catalyzes the transcription of DNA into RNA using the four ribonucleoside triphosphates as substrates. The protein is DNA-directed RNA polymerase subunit beta'' of Phaseolus vulgaris (Kidney bean).